A 106-amino-acid polypeptide reads, in one-letter code: Glutaredoxin-1 (106 aa).

An N-acetylalanine modification is found at alanine 1. In terms of domain architecture, Glutaredoxin spans 2–105; that stretch reads QEFVNSKIQP…ARLKEMGALR (104 aa). Lysine 8 carries the post-translational modification N6-succinyllysine. 2 disulfide bridges follow: cysteine 22-cysteine 25 and cysteine 78-cysteine 82.

It belongs to the glutaredoxin family.

The protein resides in the cytoplasm. In terms of biological role, has a glutathione-disulfide oxidoreductase activity in the presence of NADPH and glutathione reductase. Reduces low molecular weight disulfides and proteins. In Oryctolagus cuniculus (Rabbit), this protein is Glutaredoxin-1 (GLRX).